A 230-amino-acid polypeptide reads, in one-letter code: MKIGIIGAMEPEVAHLVESMENPSSTTIAGIEFVAGQLAGKDVIVTRSGIGKVTASIATTLLIEKYAPDVIINTGSAGGFADELAIGDIVISSEVRHHDVDVTAFGYEIGQMAQQPAAFIPDAKLVAAAQKAVASLGEVKAIEGLICTGDSFICDPVRTKTMLENFPTMAACEMEGAAIAQVCHQFGVPFVVIRSLSDNANNDSPVDFDEYIVKAGHHSALMVIALLKQL.

Glu-12 functions as the Proton acceptor in the catalytic mechanism. Substrate contacts are provided by residues Gly-78, Ile-153, and 174–175 (ME). Asp-198 serves as the catalytic Proton donor.

The protein belongs to the PNP/UDP phosphorylase family. MtnN subfamily.

It catalyses the reaction S-adenosyl-L-homocysteine + H2O = S-(5-deoxy-D-ribos-5-yl)-L-homocysteine + adenine. The catalysed reaction is S-methyl-5'-thioadenosine + H2O = 5-(methylsulfanyl)-D-ribose + adenine. It carries out the reaction 5'-deoxyadenosine + H2O = 5-deoxy-D-ribose + adenine. It participates in amino-acid biosynthesis; L-methionine biosynthesis via salvage pathway; S-methyl-5-thio-alpha-D-ribose 1-phosphate from S-methyl-5'-thioadenosine (hydrolase route): step 1/2. In terms of biological role, catalyzes the irreversible cleavage of the glycosidic bond in both 5'-methylthioadenosine (MTA) and S-adenosylhomocysteine (SAH/AdoHcy) to adenine and the corresponding thioribose, 5'-methylthioribose and S-ribosylhomocysteine, respectively. Also cleaves 5'-deoxyadenosine, a toxic by-product of radical S-adenosylmethionine (SAM) enzymes, into 5-deoxyribose and adenine. In Shewanella halifaxensis (strain HAW-EB4), this protein is 5'-methylthioadenosine/S-adenosylhomocysteine nucleosidase.